A 243-amino-acid chain; its full sequence is UMP-CMP kinase 2 (243 aa).

Residue 69–74 (GSGKGT) coordinates ATP. The interval 89–118 (SAGDLLRSEISTGREKGELILNIIKEGKIV) is NMP. A ribonucleoside 5'-phosphate is bound by residues arginine 95, 116 to 118 (KIV), and 143 to 146 (GFPR). Asparagine 150 lines the CMP pocket. The segment at 181-189 (GRNQGRVDD) is LID. Arginine 182 provides a ligand contact to ATP. Residues arginine 186 and arginine 197 each contribute to the a ribonucleoside 5'-phosphate site.

This sequence belongs to the adenylate kinase family. UMP-CMP kinase subfamily. In terms of assembly, monomer. Requires Mg(2+) as cofactor.

Its subcellular location is the cytoplasm. It localises to the nucleus. It catalyses the reaction UMP + ATP = UDP + ADP. It carries out the reaction CMP + ATP = CDP + ADP. The enzyme catalyses dCMP + ATP = dCDP + ADP. Functionally, catalyzes the phosphorylation of pyrimidine nucleoside monophosphates at the expense of ATP. Plays an important role in de novo pyrimidine nucleotide biosynthesis. Has preference for UMP and CMP as phosphate acceptors. In Oryza sativa subsp. japonica (Rice), this protein is UMP-CMP kinase 2.